The primary structure comprises 428 residues: Enolase (428 aa).

Gln163 is a (2R)-2-phosphoglycerate binding site. Glu205 functions as the Proton donor in the catalytic mechanism. Mg(2+) contacts are provided by Asp242, Glu285, and Asp312. (2R)-2-phosphoglycerate-binding residues include Lys337, Arg366, Ser367, and Lys388. Catalysis depends on Lys337, which acts as the Proton acceptor.

It belongs to the enolase family. Requires Mg(2+) as cofactor.

It is found in the cytoplasm. The protein localises to the secreted. It localises to the cell surface. The enzyme catalyses (2R)-2-phosphoglycerate = phosphoenolpyruvate + H2O. The protein operates within carbohydrate degradation; glycolysis; pyruvate from D-glyceraldehyde 3-phosphate: step 4/5. Its function is as follows. Catalyzes the reversible conversion of 2-phosphoglycerate (2-PG) into phosphoenolpyruvate (PEP). It is essential for the degradation of carbohydrates via glycolysis. The sequence is that of Enolase from Finegoldia magna (strain ATCC 29328 / DSM 20472 / WAL 2508) (Peptostreptococcus magnus).